Consider the following 629-residue polypeptide: uncharacterized protein (629 aa).

The active-site Proton acceptor is the His-562.

The protein belongs to the GMC oxidoreductase family. FAD serves as cofactor.

This is an uncharacterized protein from Mycobacterium tuberculosis (strain CDC 1551 / Oshkosh).